Consider the following 20-residue polypeptide: Maximin-Hu (20 aa).

The protein belongs to the bombinin family. Expressed by the skin glands.

It localises to the secreted. Its function is as follows. Has antimicrobial activity. The chain is Maximin-Hu from Bombina maxima (Giant fire-bellied toad).